We begin with the raw amino-acid sequence, 149 residues long: Alpha-crystallin A chain (149 aa).

In terms of domain architecture, sHSP spans 41-149 (LFRSVLESGI…DPSHSERPIP (109 aa)). Zn(2+) is bound by residues H89, E91, H96, and H143.

Belongs to the small heat shock protein (HSP20) family. As to quaternary structure, heteropolymer composed of three CRYAA and one CRYAB subunits. Inter-subunit bridging via zinc ions enhances stability, which is crucial as there is no protein turn over in the lens. Can also form homodimers and homotetramers (dimers of dimers) which serve as the building blocks of homooligomers. Within homooligomers, the zinc-binding motif is created from residues of 3 different molecules. His-89 and Glu-91 from one molecule are ligands of the zinc ion, and His-96 and His-143 residues from additional molecules complete the site with tetrahedral coordination geometry.

The protein resides in the cytoplasm. The protein localises to the nucleus. Contributes to the transparency and refractive index of the lens. May act as a chaperone, preventing aggregation of various proteins under a wide range of stress conditions. The sequence is that of Alpha-crystallin A chain (CRYAA) from Eudromia elegans (Elegant crested-tinamou).